Reading from the N-terminus, the 143-residue chain is MAMRSGFLDRRPVLVGLVFLGGCLGTLIRSVIAHAWPSRADGVPWGTLAINLVGAFVLATLLELLVHAGPDRGVRRAVRLCIGTGLLGGFTTYSALTVEAGQRVMSGQWLWGIAYLLTSVAAGALLAWVVIAAVRCVMGKRSS.

4 helical membrane passes run 13–33, 42–62, 80–100, and 111–131; these read VLVG…SVIA, GVPW…ATLL, LCIG…TVEA, and WGIA…WVVI. Na(+)-binding residues include G88 and T91.

The protein belongs to the fluoride channel Fluc/FEX (TC 1.A.43) family.

It is found in the cell membrane. It catalyses the reaction fluoride(in) = fluoride(out). Its activity is regulated as follows. Na(+) is not transported, but it plays an essential structural role and its presence is essential for fluoride channel function. Its function is as follows. Fluoride-specific ion channel. Important for reducing fluoride concentration in the cell, thus reducing its toxicity. In Cutibacterium acnes (strain DSM 16379 / KPA171202) (Propionibacterium acnes), this protein is Fluoride-specific ion channel FluC 1.